The chain runs to 196 residues: 3-isopropylmalate dehydratase small subunit (196 aa).

The protein belongs to the LeuD family. LeuD type 1 subfamily. As to quaternary structure, heterodimer of LeuC and LeuD.

It carries out the reaction (2R,3S)-3-isopropylmalate = (2S)-2-isopropylmalate. It functions in the pathway amino-acid biosynthesis; L-leucine biosynthesis; L-leucine from 3-methyl-2-oxobutanoate: step 2/4. Functionally, catalyzes the isomerization between 2-isopropylmalate and 3-isopropylmalate, via the formation of 2-isopropylmaleate. In Streptococcus thermophilus (strain CNRZ 1066), this protein is 3-isopropylmalate dehydratase small subunit.